The primary structure comprises 415 residues: Histidine--tRNA ligase (415 aa).

This sequence belongs to the class-II aminoacyl-tRNA synthetase family. Homodimer.

It is found in the cytoplasm. It carries out the reaction tRNA(His) + L-histidine + ATP = L-histidyl-tRNA(His) + AMP + diphosphate + H(+). The sequence is that of Histidine--tRNA ligase from Rhodospirillum rubrum (strain ATCC 11170 / ATH 1.1.1 / DSM 467 / LMG 4362 / NCIMB 8255 / S1).